Consider the following 603-residue polypeptide: O-acetyltransferase OatA (603 aa).

A run of 11 helical transmembrane segments spans residues 17 to 37, 45 to 65, 87 to 107, 148 to 168, 177 to 197, 211 to 231, 239 to 259, 268 to 288, 311 to 331, 333 to 353, and 382 to 402; these read YLPGLDGLRAFAVIGIIIYHL, GFLGVDTFFVISGYLITSLLI, LIPAVLFLICVVLTFTLIFKP, LWSLAIEEQFYLLFPLVITFL, IIQTLFIVSLISLGLMIVIHF, TRLQTLLLGCILAFIWPPFAL, IVVSLDIIGISGFAVLMTLFF, IYNGGFYIISFATLFIIAIAV, YSLYLWHYPIIVFVNSYYVQG, IPVYVYIIEILLTALMAEISY, and VLVILLLVPSIVVLSGQFDAL. Residues serine 453, aspartate 575, and histidine 578 contribute to the active site.

The protein belongs to the acyltransferase 3 family. As to quaternary structure, monomer.

The protein localises to the cell membrane. Functionally, responsible for O-acetylation at the C(6)-hydroxyl group of N-acetylmuramyl residues, forming the corresponding N,6-O-diacetylmuramic acid of the peptidoglycan. O-acetylation of the peptidoglycan is the major determinant for lysozyme resistance. The protein is O-acetyltransferase OatA of Staphylococcus aureus (strain NCTC 8325 / PS 47).